Reading from the N-terminus, the 82-residue chain is Myosin light chain alkali (82 aa).

Residues 7–42 (GCYEDFIECLKLYDKEENGTMMLAELQHALLALGES) form the EF-hand domain.

As to quaternary structure, myosin is a hexamer of 2 heavy chains and 4 light chains.

This chain is Myosin light chain alkali (Mlc1), found in Drosophila mauritiana (Fruit fly).